The primary structure comprises 469 residues: Diaminobutyrate--2-oxoglutarate transaminase (469 aa).

Lysine 290 bears the N6-(pyridoxal phosphate)lysine mark.

Belongs to the class-III pyridoxal-phosphate-dependent aminotransferase family. It depends on pyridoxal 5'-phosphate as a cofactor.

It localises to the cytoplasm. It catalyses the reaction L-2,4-diaminobutanoate + 2-oxoglutarate = L-aspartate 4-semialdehyde + L-glutamate. Involved in the degradation of ectoine, which allows H.elongata to utilize ectoine as both a carbon and a nitrogen source for growth. Probably catalyzes the conversion of L-2,4-diaminobutyrate (DABA) to L-aspartate beta-semialdehyde (ASA) by transamination with 2-oxoglutarate. The chain is Diaminobutyrate--2-oxoglutarate transaminase from Halomonas elongata (strain ATCC 33173 / DSM 2581 / NBRC 15536 / NCIMB 2198 / 1H9).